The following is a 116-amino-acid chain: Large ribosomal subunit protein bL20 (116 aa).

Belongs to the bacterial ribosomal protein bL20 family.

Its function is as follows. Binds directly to 23S ribosomal RNA and is necessary for the in vitro assembly process of the 50S ribosomal subunit. It is not involved in the protein synthesizing functions of that subunit. This chain is Large ribosomal subunit protein bL20, found in Mycoplasmopsis pulmonis (strain UAB CTIP) (Mycoplasma pulmonis).